The sequence spans 77 residues: Large ribosomal subunit protein bL28 (77 aa).

Residues 1–26 form a disordered region; the sequence is MARVCKVTGKRPMSGNNVSHANNKTK.

The protein belongs to the bacterial ribosomal protein bL28 family.

This is Large ribosomal subunit protein bL28 from Neisseria gonorrhoeae (strain ATCC 700825 / FA 1090).